Reading from the N-terminus, the 202-residue chain is Small ribosomal subunit protein uS4 (202 aa).

Residues 15 to 42 are disordered; it reads LGDLPGLTRKAAKRSYPPGQHGQARRKR. The 63-residue stretch at 90 to 152 folds into the S4 RNA-binding domain; it reads NRLDNVCFRL…KCSKQLAEGN (63 aa).

This sequence belongs to the universal ribosomal protein uS4 family. In terms of assembly, part of the 30S ribosomal subunit. Contacts protein S5. The interaction surface between S4 and S5 is involved in control of translational fidelity.

Its function is as follows. One of the primary rRNA binding proteins, it binds directly to 16S rRNA where it nucleates assembly of the body of the 30S subunit. With S5 and S12 plays an important role in translational accuracy. In Parasynechococcus marenigrum (strain WH8102), this protein is Small ribosomal subunit protein uS4.